A 191-amino-acid chain; its full sequence is uncharacterized protein (191 aa).

An HTH tetR-type domain is found at 3-63; that stretch reads IDRKKLILEA…EIFTTLLKEM (61 aa). The segment at residues 26 to 45 is a DNA-binding region (H-T-H motif); the sequence is TMDLVAKLANVGKGTIYTFF.

This is an uncharacterized protein from Bacillus subtilis (strain 168).